The primary structure comprises 356 residues: Protein RecA (356 aa).

Residue 71–78 (GPESSGKT) coordinates ATP.

The protein belongs to the RecA family.

It localises to the cytoplasm. Can catalyze the hydrolysis of ATP in the presence of single-stranded DNA, the ATP-dependent uptake of single-stranded DNA by duplex DNA, and the ATP-dependent hybridization of homologous single-stranded DNAs. It interacts with LexA causing its activation and leading to its autocatalytic cleavage. The sequence is that of Protein RecA from Synechococcus elongatus (strain ATCC 33912 / PCC 7942 / FACHB-805) (Anacystis nidulans R2).